A 168-amino-acid polypeptide reads, in one-letter code: Ribosome maturation factor RimM (168 aa).

In terms of domain architecture, PRC barrel spans 94-167; sequence DGNYYHHQII…KVIIELLDGL (74 aa).

Belongs to the RimM family. Binds ribosomal protein uS19.

The protein localises to the cytoplasm. Functionally, an accessory protein needed during the final step in the assembly of 30S ribosomal subunit, possibly for assembly of the head region. Essential for efficient processing of 16S rRNA. May be needed both before and after RbfA during the maturation of 16S rRNA. It has affinity for free ribosomal 30S subunits but not for 70S ribosomes. This chain is Ribosome maturation factor RimM, found in Ligilactobacillus salivarius (strain UCC118) (Lactobacillus salivarius).